The sequence spans 221 residues: Peptide methionine sulfoxide reductase MsrA (221 aa).

The active site involves Cys-54.

The protein belongs to the MsrA Met sulfoxide reductase family.

The catalysed reaction is L-methionyl-[protein] + [thioredoxin]-disulfide + H2O = L-methionyl-(S)-S-oxide-[protein] + [thioredoxin]-dithiol. The enzyme catalyses [thioredoxin]-disulfide + L-methionine + H2O = L-methionine (S)-S-oxide + [thioredoxin]-dithiol. Functionally, has an important function as a repair enzyme for proteins that have been inactivated by oxidation. Catalyzes the reversible oxidation-reduction of methionine sulfoxide in proteins to methionine. In Methylobacterium nodulans (strain LMG 21967 / CNCM I-2342 / ORS 2060), this protein is Peptide methionine sulfoxide reductase MsrA.